The following is a 212-amino-acid chain: Glutathione S-transferase (212 aa).

The GST N-terminal domain occupies 1–82; sequence MGMKLHGPAM…YIAHTYADKG (82 aa). Glutathione is bound by residues Ser-11, 12–13, 40–41, 53–54, and 66–67; these read PA, HK, QV, and ES. The GST C-terminal domain maps to 89-212; sequence DPKKMAIMSV…AWSKAIEYKQ (124 aa).

Belongs to the GST superfamily. Phi family.

It carries out the reaction RX + glutathione = an S-substituted glutathione + a halide anion + H(+). Its function is as follows. Conjugation of reduced glutathione to a wide number of exogenous and endogenous hydrophobic electrophiles. This Hyoscyamus muticus (Egyptian henbane) protein is Glutathione S-transferase.